The chain runs to 291 residues: Cytosolic Fe-S cluster assembly factor CFD1 (291 aa).

Glycine 24–serine 31 serves as a coordination point for ATP. Positions 199 and 202 each coordinate [4Fe-4S] cluster. Residues glutamate 270–glutamine 291 form a disordered region. A compositionally biased stretch (basic and acidic residues) spans lysine 276–arginine 285.

The protein belongs to the Mrp/NBP35 ATP-binding proteins family. NUBP2/CFD1 subfamily. In terms of assembly, heterotetramer of 2 NBP35 and 2 CFD1 chains. It depends on [4Fe-4S] cluster as a cofactor.

It localises to the cytoplasm. Functionally, component of the cytosolic iron-sulfur (Fe/S) protein assembly (CIA) machinery. Required for maturation of extramitochondrial Fe-S proteins. The NBP35-CFD1 heterotetramer forms a Fe-S scaffold complex, mediating the de novo assembly of an Fe-S cluster and its transfer to target apoproteins. Required for biogenesis and export of both ribosomal subunits, which may reflect a role in assembly of the Fe/S clusters in RLI1, a protein which performs rRNA processing and ribosome export. In Yarrowia lipolytica (strain CLIB 122 / E 150) (Yeast), this protein is Cytosolic Fe-S cluster assembly factor CFD1.